The following is a 2057-amino-acid chain: Rho guanine nucleotide exchange factor 17 (2057 aa).

3 disordered regions span residues 20-361, 375-461, and 481-559; these read ERWS…DTGG, LASP…SNPD, and RVRK…LKPS. Phosphoserine occurs at positions 142 and 152. A compositionally biased stretch (low complexity) spans 227-249; that stretch reads ARASSSSSIASSYPVSRSRAASS. Residues Ser305 and Ser308 each carry the phosphoserine modification. Residues 314–323 show a composition bias toward gly residues; that stretch reads GGLGSAGGVG. 7 positions are modified to phosphoserine: Ser324, Ser330, Ser377, Ser381, Ser389, Ser404, and Ser414. Positions 382-391 are enriched in polar residues; the sequence is RGSSRYSSTE. Positions 440 to 451 are enriched in basic and acidic residues; sequence PLRDGGLDLDKN. Ser456 is modified (phosphoserine). The span at 507 to 524 shows a compositional bias: low complexity; that stretch reads EQSESTLSQSPTSPTTRP. 2 positions are modified to phosphoserine: Ser538 and Ser611. 2 disordered regions span residues 615–647 and 663–952; these read AGDM…PEPL and LSST…VRHA. A compositionally biased stretch (polar residues) spans 663–672; sequence LSSTSAQTNH. Phosphoserine is present on Ser689. Residues Thr692 and Thr695 each carry the phosphothreonine modification. A compositionally biased stretch (polar residues) spans 710 to 719; it reads PNGTELSNGE. Ser728 is subject to Phosphoserine. Residues 747–760 are compositionally biased toward polar residues; that stretch reads SVDSNLLGSLNSKT. Residues 820–829 show a composition bias toward basic and acidic residues; that stretch reads SLSDPSRRGE. Ser906 is modified (phosphoserine). Positions 909-920 are enriched in basic residues; the sequence is LTRRGSKKRPAR. The span at 922 to 931 shows a compositional bias: basic and acidic residues; that stretch reads SHQELRREEG. Over residues 933–944 the composition is skewed to polar residues; the sequence is QDQTGSLTQTRS. Ser953 and Ser994 each carry phosphoserine. Pro residues predominate over residues 1015–1027; sequence GPVDLPCLPPSAP. The disordered stretch occupies residues 1015–1054; that stretch reads GPVDLPCLPPSAPPSTETKPSGAARATPDEPAPASKCCSK. The 189-residue stretch at 1059-1247 folds into the DH domain; it reads MRKHVTMTLL…KQVAERINKG (189 aa). Residue Ser1324 is modified to Phosphoserine. Disordered regions lie at residues 1555 to 1713 and 1983 to 2050; these read RCPR…SSRG and CSTP…DSTN. Residues 1579-1589 are compositionally biased toward acidic residues; sequence LDVEATAEEEA. The segment covering 1638-1674 has biased composition (low complexity); it reads SPSPSGTLQSQASQSTISSSFGNEETPSSKEATAETT.

In terms of biological role, acts as a guanine nucleotide exchange factor (GEF) for RhoA GTPases. This chain is Rho guanine nucleotide exchange factor 17 (Arhgef17), found in Mus musculus (Mouse).